Here is a 185-residue protein sequence, read N- to C-terminus: ATP synthase subunit b, chloroplastic (185 aa).

The helical transmembrane segment at 31–53 (IINITVVLGILIYFGKGVLSNLL) threads the bilayer.

The protein belongs to the ATPase B chain family. In terms of assembly, F-type ATPases have 2 components, F(1) - the catalytic core - and F(0) - the membrane proton channel. F(1) has five subunits: alpha(3), beta(3), gamma(1), delta(1), epsilon(1). F(0) has four main subunits: a(1), b(1), b'(1) and c(10-14). The alpha and beta chains form an alternating ring which encloses part of the gamma chain. F(1) is attached to F(0) by a central stalk formed by the gamma and epsilon chains, while a peripheral stalk is formed by the delta, b and b' chains.

Its subcellular location is the plastid. It is found in the chloroplast thylakoid membrane. Functionally, f(1)F(0) ATP synthase produces ATP from ADP in the presence of a proton or sodium gradient. F-type ATPases consist of two structural domains, F(1) containing the extramembraneous catalytic core and F(0) containing the membrane proton channel, linked together by a central stalk and a peripheral stalk. During catalysis, ATP synthesis in the catalytic domain of F(1) is coupled via a rotary mechanism of the central stalk subunits to proton translocation. Component of the F(0) channel, it forms part of the peripheral stalk, linking F(1) to F(0). In Gnetum parvifolium (Small-leaved jointfir), this protein is ATP synthase subunit b, chloroplastic.